A 245-amino-acid polypeptide reads, in one-letter code: Photosystem II protein PSBS2 (245 aa).

The transit peptide at 1–25 directs the protein to the chloroplast; the sequence is MAMTLSTKAFAQRGVSARKNTVRVY. Transmembrane regions (helical) follow at residues 72–92, 108–128, 185–205, and 217–237; these read LFVGRLAMVGFSASLIGEILT, GIEVDGLVIGLIAFNLIAAVL, LGFAFSLIGEAVTGKGALAQF, and EFGLVVFILFLLFAAINEGSG.

Belongs to the ELIP/psbS family.

It localises to the plastid. It is found in the chloroplast thylakoid membrane. Functionally, required for non-photochemical quenching (NPQ), a mechanism that converts and dissipates the harmful excess absorbed light energy into heat and protect the photosynthetic apparatus from photo-oxidative damage. Seems involved in the activation of NPQ, possibly by promoting conformational changes required for activation of LHCSR3-dependent quenching in the antenna of photosystem II (PSII). The chain is Photosystem II protein PSBS2 from Chlamydomonas reinhardtii (Chlamydomonas smithii).